We begin with the raw amino-acid sequence, 409 residues long: Elongation factor Tu, plastid (409 aa).

Positions 10–214 constitute a tr-type G domain; sequence KPHINIGTIG…SVDSYIPTPV (205 aa). Positions 19–26 are G1; it reads GHVDHGKT. Position 19 to 26 (19 to 26) interacts with GTP; that stretch reads GHVDHGKT. Threonine 26 provides a ligand contact to Mg(2+). The G2 stretch occupies residues 60 to 64; sequence GITIN. A G3 region spans residues 81 to 84; the sequence is DCPG. GTP is bound by residues 81–85 and 136–139; these read DCPGH and NKED. Positions 136–139 are G4; sequence NKED. A G5 region spans residues 174-176; sequence SAL.

Belongs to the TRAFAC class translation factor GTPase superfamily. Classic translation factor GTPase family. EF-Tu/EF-1A subfamily.

The protein resides in the plastid. It catalyses the reaction GTP + H2O = GDP + phosphate + H(+). Functionally, GTP hydrolase that promotes the GTP-dependent binding of aminoacyl-tRNA to the A-site of ribosomes during protein biosynthesis. This Helicosporidium sp. subsp. Simulium jonesii (Green alga) protein is Elongation factor Tu, plastid (tufA).